We begin with the raw amino-acid sequence, 563 residues long: Arginine--tRNA ligase (563 aa).

Residues Pro120 to His130 carry the 'HIGH' region motif.

Belongs to the class-I aminoacyl-tRNA synthetase family. In terms of assembly, monomer.

It is found in the cytoplasm. The enzyme catalyses tRNA(Arg) + L-arginine + ATP = L-arginyl-tRNA(Arg) + AMP + diphosphate. The polypeptide is Arginine--tRNA ligase (Clostridium beijerinckii (strain ATCC 51743 / NCIMB 8052) (Clostridium acetobutylicum)).